A 129-amino-acid chain; its full sequence is Small ribosomal subunit protein uS9 (129 aa).

It belongs to the universal ribosomal protein uS9 family.

The chain is Small ribosomal subunit protein uS9 from Helicobacter pylori (strain HPAG1).